A 307-amino-acid polypeptide reads, in one-letter code: UDP-N-acetylenolpyruvoylglucosamine reductase (307 aa).

One can recognise an FAD-binding PCMH-type domain in the interval Arg27 to Asp193. Arg172 is an active-site residue. Ser222 functions as the Proton donor in the catalytic mechanism. Residue Glu299 is part of the active site.

Belongs to the MurB family. FAD serves as cofactor.

The protein resides in the cytoplasm. It catalyses the reaction UDP-N-acetyl-alpha-D-muramate + NADP(+) = UDP-N-acetyl-3-O-(1-carboxyvinyl)-alpha-D-glucosamine + NADPH + H(+). It functions in the pathway cell wall biogenesis; peptidoglycan biosynthesis. Cell wall formation. The protein is UDP-N-acetylenolpyruvoylglucosamine reductase of Caulobacter sp. (strain K31).